Here is a 66-residue protein sequence, read N- to C-terminus: Large ribosomal subunit protein bL35 (66 aa).

The segment at 1-22 (MAYKLKSHRGAAKRFKKTASGG) is disordered.

Belongs to the bacterial ribosomal protein bL35 family.

This Pseudoalteromonas translucida (strain TAC 125) protein is Large ribosomal subunit protein bL35.